The sequence spans 205 residues: High frequency lysogenization protein HflD homolog (205 aa).

Belongs to the HflD family.

It localises to the cytoplasm. Its subcellular location is the cell inner membrane. This chain is High frequency lysogenization protein HflD homolog, found in Haemophilus influenzae (strain ATCC 51907 / DSM 11121 / KW20 / Rd).